A 415-amino-acid polypeptide reads, in one-letter code: Phosphoribosylamine--glycine ligase (415 aa).

The ATP-grasp domain maps to 108–311; sequence KKIMEKYNIP…LMQHIIDLDE (204 aa). 134–191 contributes to the ATP binding site; that stretch reads IENCELPVVVKKDGLAAGKGVIIADTIEAARSAIEIMYGDEEEGTVVFETFLEGEEFS. 2 residues coordinate Mg(2+): E281 and N283.

This sequence belongs to the GARS family. The cofactor is Mg(2+). It depends on Mn(2+) as a cofactor.

The enzyme catalyses 5-phospho-beta-D-ribosylamine + glycine + ATP = N(1)-(5-phospho-beta-D-ribosyl)glycinamide + ADP + phosphate + H(+). It participates in purine metabolism; IMP biosynthesis via de novo pathway; N(1)-(5-phospho-D-ribosyl)glycinamide from 5-phospho-alpha-D-ribose 1-diphosphate: step 2/2. This chain is Phosphoribosylamine--glycine ligase, found in Staphylococcus aureus (strain COL).